A 35-amino-acid chain; its full sequence is Photosystem II reaction center protein M (35 aa).

The helical transmembrane segment at 5 to 25 (IFGLTATALFIIIPTSFLLIL) threads the bilayer.

It belongs to the PsbM family. As to quaternary structure, PSII is composed of 1 copy each of membrane proteins PsbA, PsbB, PsbC, PsbD, PsbE, PsbF, PsbH, PsbI, PsbJ, PsbK, PsbL, PsbM, PsbT, PsbX, PsbY, PsbZ, Psb30/Ycf12, at least 3 peripheral proteins of the oxygen-evolving complex and a large number of cofactors. It forms dimeric complexes.

The protein resides in the plastid. It localises to the chloroplast thylakoid membrane. Its function is as follows. One of the components of the core complex of photosystem II (PSII). PSII is a light-driven water:plastoquinone oxidoreductase that uses light energy to abstract electrons from H(2)O, generating O(2) and a proton gradient subsequently used for ATP formation. It consists of a core antenna complex that captures photons, and an electron transfer chain that converts photonic excitation into a charge separation. This subunit is found at the monomer-monomer interface. The chain is Photosystem II reaction center protein M from Tetradesmus obliquus (Green alga).